Here is a 1043-residue protein sequence, read N- to C-terminus: F-box DNA helicase 1 (1043 aa).

Residues 30-56 (QRWTNRDPNHGLYPKPRTKRGSRGQGS) are disordered. The short motif at 57–64 (QRCIPEFF) is the PIP-box element. The disordered stretch occupies residues 101-191 (CALPQEGSAG…QDAGDVGPDP (91 aa)). Serine 124 carries the phosphoserine modification. The F-box domain maps to 138-184 (SRWDGVSKKAPRHHLSVPCTRPREARQEAEDSTSRLSAESGETDQDA). Basic and acidic residues predominate over residues 158–170 (RPREARQEAEDST). The UvrD-like helicase ATP-binding domain occupies 442 to 705 (THEQQLILNH…FYLTQSFRFG (264 aa)). Position 463–470 (463–470 (AFAGTGKT)) interacts with ATP. The APIM motif signature appears at 807–811 (KFIRR).

The protein belongs to the helicase family. UvrD subfamily. As to quaternary structure, part of the SCF (SKP1-CUL1-F-box) E3 ubiquitin-protein ligase complex SCF(FBH1) composed of CUL1, SKP1, RBX1 and FBH1. Interacts with RAD51. Interacts with RPA2. Interacts (via PIP-box and RanBP2-type zinc finger) with PCNA. In terms of processing, ubiquitinated. Ubiquitination by the DCX(DTL) complex, also named CRL4(CDT2), leading to its degradation: ubiquitination takes place after its localization to DNA damage sites, possibly to facilitate the translesion synthesis (TLS) pathway.

Its subcellular location is the nucleus. The protein resides in the chromosome. The catalysed reaction is Couples ATP hydrolysis with the unwinding of duplex DNA by translocating in the 3'-5' direction.. It catalyses the reaction ATP + H2O = ADP + phosphate + H(+). It functions in the pathway protein modification; protein ubiquitination. Functionally, 3'-5' DNA helicase and substrate-recognition component of the SCF(FBH1) E3 ubiquitin ligase complex that plays a key role in response to stalled/damaged replication forks. Involved in genome maintenance by acting as an anti-recombinogenic helicase and preventing extensive strand exchange during homologous recombination: promotes RAD51 filament dissolution from stalled forks, thereby inhibiting homologous recombination and preventing excessive recombination. Also promotes cell death and DNA double-strand breakage in response to replication stress: together with MUS81, promotes the endonucleolytic DNA cleavage following prolonged replication stress via its helicase activity, possibly to eliminate cells with excessive replication stress. Plays a major role in remodeling of stalled DNA forks by catalyzing fork regression, in which the fork reverses and the two nascent DNA strands anneal. In addition to the helicase activity, also acts as the substrate-recognition component of the SCF(FBH1) E3 ubiquitin ligase complex, a complex that mediates ubiquitination of RAD51, leading to regulate RAD51 subcellular location. In Homo sapiens (Human), this protein is F-box DNA helicase 1.